Here is a 221-residue protein sequence, read N- to C-terminus: Cytidylate kinase 1 (221 aa).

An ATP-binding site is contributed by 7 to 15 (GPSASGKSS).

This sequence belongs to the cytidylate kinase family. Type 1 subfamily.

The protein localises to the cytoplasm. It carries out the reaction CMP + ATP = CDP + ADP. The enzyme catalyses dCMP + ATP = dCDP + ADP. The chain is Cytidylate kinase 1 from Borrelia garinii subsp. bavariensis (strain ATCC BAA-2496 / DSM 23469 / PBi) (Borreliella bavariensis).